The primary structure comprises 343 residues: Small ribosomal subunit biogenesis GTPase RsgA (343 aa).

Positions R116–F275 constitute a CP-type G domain. Residues N163–D166 and G217–S225 each bind GTP. Zn(2+) contacts are provided by C299, C304, H306, and C312.

It belongs to the TRAFAC class YlqF/YawG GTPase family. RsgA subfamily. In terms of assembly, monomer. Associates with 30S ribosomal subunit, binds 16S rRNA. It depends on Zn(2+) as a cofactor.

It localises to the cytoplasm. In terms of biological role, one of several proteins that assist in the late maturation steps of the functional core of the 30S ribosomal subunit. Helps release RbfA from mature subunits. May play a role in the assembly of ribosomal proteins into the subunit. Circularly permuted GTPase that catalyzes slow GTP hydrolysis, GTPase activity is stimulated by the 30S ribosomal subunit. The protein is Small ribosomal subunit biogenesis GTPase RsgA of Azotobacter vinelandii (strain DJ / ATCC BAA-1303).